We begin with the raw amino-acid sequence, 583 residues long: Isocitrate dehydrogenase kinase/phosphatase (583 aa).

Residues 315–321 (APGIRGM) and lysine 336 contribute to the ATP site. The active site involves aspartate 371.

The protein belongs to the AceK family.

It localises to the cytoplasm. It catalyses the reaction L-seryl-[isocitrate dehydrogenase] + ATP = O-phospho-L-seryl-[isocitrate dehydrogenase] + ADP + H(+). Its function is as follows. Bifunctional enzyme which can phosphorylate or dephosphorylate isocitrate dehydrogenase (IDH) on a specific serine residue. This is a regulatory mechanism which enables bacteria to bypass the Krebs cycle via the glyoxylate shunt in response to the source of carbon. When bacteria are grown on glucose, IDH is fully active and unphosphorylated, but when grown on acetate or ethanol, the activity of IDH declines drastically concomitant with its phosphorylation. In Salmonella agona (strain SL483), this protein is Isocitrate dehydrogenase kinase/phosphatase.